We begin with the raw amino-acid sequence, 283 residues long: Adenylate dimethylallyltransferase (283 aa).

This sequence belongs to the isopentenyl transferase family.

The enzyme catalyses dimethylallyl diphosphate + AMP = N(6)-(dimethylallyl)adenosine 5'-phosphate + diphosphate. Transfers dimethylallyl groups to AMP as part of the biosynthesis of cytokinin phytohormones like isopentenyl adenine or discadenine which controle spore formation and viability. The chain is Adenylate dimethylallyltransferase (iptA) from Dictyostelium discoideum (Social amoeba).